The following is a 98-amino-acid chain: NADH-ubiquinone oxidoreductase chain 4L (98 aa).

The next 3 membrane-spanning stretches (helical) occupy residues 1–21 (MAPI…GVLI), 28–48 (STLL…TLLI), and 59–79 (APLI…ALLV).

This sequence belongs to the complex I subunit 4L family. Core subunit of respiratory chain NADH dehydrogenase (Complex I) which is composed of 45 different subunits.

It is found in the mitochondrion inner membrane. It catalyses the reaction a ubiquinone + NADH + 5 H(+)(in) = a ubiquinol + NAD(+) + 4 H(+)(out). Its function is as follows. Core subunit of the mitochondrial membrane respiratory chain NADH dehydrogenase (Complex I) which catalyzes electron transfer from NADH through the respiratory chain, using ubiquinone as an electron acceptor. Part of the enzyme membrane arm which is embedded in the lipid bilayer and involved in proton translocation. This chain is NADH-ubiquinone oxidoreductase chain 4L (MT-ND4L), found in Perameles gunnii (Eastern barred bandicoot).